Consider the following 140-residue polypeptide: Large-conductance mechanosensitive channel (140 aa).

2 helical membrane-spanning segments follow: residues 16–36 and 84–104; these read VIDL…VTAL and INTV…VKLI.

This sequence belongs to the MscL family. As to quaternary structure, homopentamer.

Its subcellular location is the cell inner membrane. Its function is as follows. Channel that opens in response to stretch forces in the membrane lipid bilayer. May participate in the regulation of osmotic pressure changes within the cell. This is Large-conductance mechanosensitive channel from Xanthomonas oryzae pv. oryzae (strain PXO99A).